A 210-amino-acid chain; its full sequence is MDLRKHLGLLTLLLVAVFAFYGRPADACSCMPSHPQTHFAQADYVVQLRVLRKSDTIEPGRTTYKVHIKRTYKATSEARRMLRDGRLSTPQDDAMCGINLDLGKVYIVAGRMPTLNICSYYKEYTRMTITERHGFSGGYAKATNCTVTPCFGERCFKGRNYADTCKWSPFGKCETNYSACMPHKVQTVNGVISRCRWRRTQLYRKCMSNP.

The N-terminal stretch at 1–27 (MDLRKHLGLLTLLLVAVFAFYGRPADA) is a signal peptide. C28 provides a ligand contact to Zn(2+). Involved in metalloproteinase-binding stretches follow at residues 28–31 (CSCM) and 93–94 (DA). Cystine bridges form between C28-C96, C30-C118, C145-C195, C150-C155, and C165-C180. An NTR domain is found at 28–145 (CSCMPSHPQT…SGGYAKATNC (118 aa)).

The protein belongs to the protease inhibitor I35 (TIMP) family. As to expression, expressed in heads of female and male adult flies. Expressed at the time of eclosion in unopened wings of adult flies. Strongly expressed at the tip of ovarian germarium region 1 where germline stem cells (GSCs) and cystoblasts reside and in region 2 of the germarium.

It localises to the secreted. Metalloproteinase inhibitor that acts on both matrix metalloproteinases Mmp1 and Mmp2 in vitro. Complexes with metalloproteinases and irreversibly inactivates them by binding to their catalytic zinc cofactor. Required for wing maturation which is the final step in morphogenesis of the adult fly. Involved in the negative regulation of developmental tissue invasion for imaginal disk eversion during metamorphosis by inhibiting Mmp-mediated basement membrane (BM) degradation. Required for oogenesis and for the long-term maintainance of germarial structure and shape in the adult ovaries. Required for maintaining composition and biophysical properties of the extracellular matrix (ECM), and for the normal organization and cyst production of the germline stem cell (GSC) niche. The polypeptide is Tissue inhibitor of metalloproteinase (Drosophila melanogaster (Fruit fly)).